We begin with the raw amino-acid sequence, 224 residues long: Putative ribonuclease Z (224 aa).

Positions 120 and 184 each coordinate Zn(2+).

This sequence belongs to the RNase Z family. Homodimer. It depends on Zn(2+) as a cofactor.

The enzyme catalyses Endonucleolytic cleavage of RNA, removing extra 3' nucleotides from tRNA precursor, generating 3' termini of tRNAs. A 3'-hydroxy group is left at the tRNA terminus and a 5'-phosphoryl group is left at the trailer molecule.. Functionally, zinc phosphodiesterase, which displays some tRNA 3'-processing endonuclease activity. Probably involved in tRNA maturation, by removing a 3'-trailer from precursor tRNA. This Mycobacterium tuberculosis (strain CDC 1551 / Oshkosh) protein is Putative ribonuclease Z (rnz).